Reading from the N-terminus, the 366-residue chain is Aminomethyltransferase (366 aa).

Belongs to the GcvT family. As to quaternary structure, the glycine cleavage system is composed of four proteins: P, T, L and H.

The enzyme catalyses N(6)-[(R)-S(8)-aminomethyldihydrolipoyl]-L-lysyl-[protein] + (6S)-5,6,7,8-tetrahydrofolate = N(6)-[(R)-dihydrolipoyl]-L-lysyl-[protein] + (6R)-5,10-methylene-5,6,7,8-tetrahydrofolate + NH4(+). Functionally, the glycine cleavage system catalyzes the degradation of glycine. In Bacillus cytotoxicus (strain DSM 22905 / CIP 110041 / 391-98 / NVH 391-98), this protein is Aminomethyltransferase.